A 261-amino-acid chain; its full sequence is Small ribosomal subunit protein eS4z (261 aa).

The S4 RNA-binding domain maps to 42–104; it reads LPLVLIIRNR…TNENFRLLYD (63 aa).

This sequence belongs to the eukaryotic ribosomal protein eS4 family.

The protein localises to the cytoplasm. In Arabidopsis thaliana (Mouse-ear cress), this protein is Small ribosomal subunit protein eS4z (RPS4A).